Here is a 367-residue protein sequence, read N- to C-terminus: UDP-N-acetylglucosamine--N-acetylmuramyl-(pentapeptide) pyrophosphoryl-undecaprenol N-acetylglucosamine transferase (367 aa).

UDP-N-acetyl-alpha-D-glucosamine is bound by residues 15–17 (TGG), N127, R163, S191, I249, and Q294.

It belongs to the glycosyltransferase 28 family. MurG subfamily.

The protein resides in the cell inner membrane. It catalyses the reaction di-trans,octa-cis-undecaprenyl diphospho-N-acetyl-alpha-D-muramoyl-L-alanyl-D-glutamyl-meso-2,6-diaminopimeloyl-D-alanyl-D-alanine + UDP-N-acetyl-alpha-D-glucosamine = di-trans,octa-cis-undecaprenyl diphospho-[N-acetyl-alpha-D-glucosaminyl-(1-&gt;4)]-N-acetyl-alpha-D-muramoyl-L-alanyl-D-glutamyl-meso-2,6-diaminopimeloyl-D-alanyl-D-alanine + UDP + H(+). The protein operates within cell wall biogenesis; peptidoglycan biosynthesis. Cell wall formation. Catalyzes the transfer of a GlcNAc subunit on undecaprenyl-pyrophosphoryl-MurNAc-pentapeptide (lipid intermediate I) to form undecaprenyl-pyrophosphoryl-MurNAc-(pentapeptide)GlcNAc (lipid intermediate II). This Burkholderia pseudomallei (strain 1106a) protein is UDP-N-acetylglucosamine--N-acetylmuramyl-(pentapeptide) pyrophosphoryl-undecaprenol N-acetylglucosamine transferase.